Reading from the N-terminus, the 265-residue chain is Tetrapyrrole-binding protein, chloroplastic (265 aa).

Residues 1 to 24 are disordered; it reads MATTNSLHHHHHSSPSYTHHRNNL. The transit peptide at 1–69 directs the protein to the chloroplast; sequence MATTNSLHHH…TAVSAVSTTN (69 aa). The segment covering 7–23 has biased composition (basic residues); sequence LHHHHHSSPSYTHHRNN.

As to quaternary structure, interacts with CHLH, the protoporphyrin IX-binding subunit of Mg-chelatase. Monomer or extremely compact dimer.

It localises to the plastid. Its subcellular location is the chloroplast membrane. Regulates chlorophyll synthesis and plastid-to-nucleus signal transduction by binding both the product and the substrate of Mg-chelatase, an enzyme that produces magnesium-protoporphyrin IX (Mg-Proto). Also activates Mg-chelatase. Neither binds abscisic acid (ABA) nor is involved in ABA signaling. The sequence is that of Tetrapyrrole-binding protein, chloroplastic (GUN4) from Arabidopsis thaliana (Mouse-ear cress).